A 370-amino-acid polypeptide reads, in one-letter code: F-box protein At1g66490 (370 aa).

An F-box domain is found at 1-46 (MRTISDLPVALVEEILSRVPLTSLSAVRSTCKTWNALSKTQIFGKT).

In Arabidopsis thaliana (Mouse-ear cress), this protein is F-box protein At1g66490.